The primary structure comprises 269 residues: UPF0162 protein BU173 (269 aa).

This sequence belongs to the UPF0162 family.

The polypeptide is UPF0162 protein BU173 (Buchnera aphidicola subsp. Acyrthosiphon pisum (strain APS) (Acyrthosiphon pisum symbiotic bacterium)).